A 91-amino-acid polypeptide reads, in one-letter code: Insertion element IS1 2 protein InsA (91 aa).

Belongs to the IS1 elements InsA family.

Functionally, absolutely required for transposition of IS1. The chain is Insertion element IS1 2 protein InsA (insA2) from Escherichia coli (strain K12).